The chain runs to 746 residues: 1,4-alpha-glucan branching enzyme GlgB (746 aa).

The active-site Nucleophile is the aspartate 418. The Proton donor role is filled by glutamate 471.

Belongs to the glycosyl hydrolase 13 family. GlgB subfamily. Monomer.

It catalyses the reaction Transfers a segment of a (1-&gt;4)-alpha-D-glucan chain to a primary hydroxy group in a similar glucan chain.. It functions in the pathway glycan biosynthesis; glycogen biosynthesis. Functionally, catalyzes the formation of the alpha-1,6-glucosidic linkages in glycogen by scission of a 1,4-alpha-linked oligosaccharide from growing alpha-1,4-glucan chains and the subsequent attachment of the oligosaccharide to the alpha-1,6 position. This Nitrosospira multiformis (strain ATCC 25196 / NCIMB 11849 / C 71) protein is 1,4-alpha-glucan branching enzyme GlgB.